The sequence spans 385 residues: Mannitol-1-phosphate 5-dehydrogenase (385 aa).

3–14 contributes to the NAD(+) binding site; that stretch reads ALQFGAGNIGRG.

Belongs to the mannitol dehydrogenase family.

The enzyme catalyses D-mannitol 1-phosphate + NAD(+) = beta-D-fructose 6-phosphate + NADH + H(+). The chain is Mannitol-1-phosphate 5-dehydrogenase from Buchnera aphidicola subsp. Acyrthosiphon pisum (strain Tuc7).